A 348-amino-acid chain; its full sequence is Phosphate acyltransferase (348 aa).

This sequence belongs to the PlsX family. As to quaternary structure, homodimer. Probably interacts with PlsY.

The protein localises to the cytoplasm. The enzyme catalyses a fatty acyl-[ACP] + phosphate = an acyl phosphate + holo-[ACP]. It participates in lipid metabolism; phospholipid metabolism. Catalyzes the reversible formation of acyl-phosphate (acyl-PO(4)) from acyl-[acyl-carrier-protein] (acyl-ACP). This enzyme utilizes acyl-ACP as fatty acyl donor, but not acyl-CoA. In Francisella tularensis subsp. tularensis (strain FSC 198), this protein is Phosphate acyltransferase.